Consider the following 656-residue polypeptide: tRNA 5-methylaminomethyl-2-thiouridine biosynthesis bifunctional protein MnmC (656 aa).

The interval Met1–Ala236 is tRNA (mnm(5)s(2)U34)-methyltransferase. The interval Ile260–Ser656 is FAD-dependent cmnm(5)s(2)U34 oxidoreductase.

This sequence in the N-terminal section; belongs to the methyltransferase superfamily. tRNA (mnm(5)s(2)U34)-methyltransferase family. In the C-terminal section; belongs to the DAO family. FAD serves as cofactor.

It is found in the cytoplasm. It carries out the reaction 5-aminomethyl-2-thiouridine(34) in tRNA + S-adenosyl-L-methionine = 5-methylaminomethyl-2-thiouridine(34) in tRNA + S-adenosyl-L-homocysteine + H(+). Its function is as follows. Catalyzes the last two steps in the biosynthesis of 5-methylaminomethyl-2-thiouridine (mnm(5)s(2)U) at the wobble position (U34) in tRNA. Catalyzes the FAD-dependent demodification of cmnm(5)s(2)U34 to nm(5)s(2)U34, followed by the transfer of a methyl group from S-adenosyl-L-methionine to nm(5)s(2)U34, to form mnm(5)s(2)U34. The chain is tRNA 5-methylaminomethyl-2-thiouridine biosynthesis bifunctional protein MnmC from Paraburkholderia phytofirmans (strain DSM 17436 / LMG 22146 / PsJN) (Burkholderia phytofirmans).